Consider the following 148-residue polypeptide: HTH-type transcriptional regulator Rv2324 (148 aa).

The 62-residue stretch at 4–65 (LDDTDERILA…VVDRNALGWN (62 aa)) folds into the HTH asnC-type domain. Positions 23-42 (FAEIGHKVSLSAPAVKRRVD) form a DNA-binding region, H-T-H motif.

Homodimer. Forms oligomers.

With respect to regulation, the DNA-binding activity of Rv2324 is modulated by interaction of Rv2324 with amino acids. Aspartate is the only effector amino acid that completely abolishes DNA binding. The majority of amino acids induce a dimer-tetramer or dimer-hexamer oligomeric transition. In response to amino-acid binding, adopts an open quaternary association, which is a part of the functional requirement to bind to non-symmetrically distributed target DNA binding sites. Its function is as follows. Transcriptional regulator involved in growth, DNA replication and damage control. Plays a crucial role in regulating survival and growth of M.tuberculosis. Could function as a global regulator in both the latent/persistent and active phases of growth. Binds to its own promoter region and to promoters of multiple metabolic genes, such as serB2, lat, ald and roc operon. In vitro, interacts with intrinsically curved and non-curved DNA molecules, and with both supercoiled and linear DNA, with higher affinity for supercoiled DNA. Binds to DNA recombination, replication and repair intermediates. In Mycobacterium tuberculosis (strain ATCC 25618 / H37Rv), this protein is HTH-type transcriptional regulator Rv2324.